Reading from the N-terminus, the 420-residue chain is Innexin-3 (420 aa).

4 consecutive transmembrane segments (helical) span residues 33-53 (ATLL…GSAI), 104-124 (WVPI…WIWS), 193-213 (MLYI…FIIL), and 278-298 (IYLF…INTL). Residues 378-405 (NRDFHHGHSTKSTSPGLEEGHHEHLYTP) are disordered. The span at 395–405 (EEGHHEHLYTP) shows a compositional bias: basic and acidic residues.

Belongs to the pannexin family. Interacts with F-actin. Evenly distributed along the adjoining membranes of the two pm5 pharyngeal muscle cells.

It is found in the cell membrane. The protein resides in the cell junction. The protein localises to the gap junction. Its function is as follows. Structural component of gap junctions. Plays a role in maintaining gap junction activity to promote phayngeal muscle contraction. The chain is Innexin-3 from Caenorhabditis elegans.